The sequence spans 401 residues: Argininosuccinate synthase (401 aa).

9-17 (AYSGGLDTS) is an ATP binding site. Position 86 (tyrosine 86) interacts with L-citrulline. Glycine 116 provides a ligand contact to ATP. 3 residues coordinate L-aspartate: threonine 118, asparagine 122, and aspartate 123. An L-citrulline-binding site is contributed by asparagine 122. Positions 126, 174, 183, 259, and 271 each coordinate L-citrulline.

It belongs to the argininosuccinate synthase family. Type 1 subfamily. In terms of assembly, homotetramer.

Its subcellular location is the cytoplasm. The enzyme catalyses L-citrulline + L-aspartate + ATP = 2-(N(omega)-L-arginino)succinate + AMP + diphosphate + H(+). Its pathway is amino-acid biosynthesis; L-arginine biosynthesis; L-arginine from L-ornithine and carbamoyl phosphate: step 2/3. The protein is Argininosuccinate synthase of Bacillus thuringiensis subsp. konkukian (strain 97-27).